Reading from the N-terminus, the 694-residue chain is Phosphatase and actin regulator 4 (694 aa).

Disordered stretches follow at residues 1 to 354 (MEDP…SPLV) and 375 to 405 (QDIS…PSRL). Over residues 45–54 (KPWKWRKKKS) the composition is skewed to basic residues. A compositionally biased stretch (basic and acidic residues) spans 55 to 84 (SDKFKETSEVLERKISMRKPREELVKRGVL). One copy of the RPEL 1 repeat lies at 63 to 88 (EVLERKISMRKPREELVKRGVLLEDP). Serine 116, serine 118, serine 129, and serine 145 each carry phosphoserine. Low complexity-rich tracts occupy residues 184 to 209 (AGST…TAAT) and 231 to 249 (TLPA…TAPA). Residues 250 to 259 (KQPPIPPPKP) are compositionally biased toward pro residues. Serine 264, serine 285, serine 335, and serine 337 each carry phosphoserine. A compositionally biased stretch (pro residues) spans 329–352 (LIIPPSSPSPPLPTHIPPEPPRSP). Residues 381 to 392 (EDQKTEVPKKIQ) are compositionally biased toward basic and acidic residues. Serine 420 is modified (phosphoserine). Threonine 425 is subject to Phosphothreonine. 7 positions are modified to phosphoserine: serine 436, serine 446, serine 457, serine 503, serine 505, serine 549, and serine 582. Positions 467-562 (VPDDEEEEQT…TNLNSWPRKS (96 aa)) are disordered. Residues 546 to 559 (SRPSEPETNLNSWP) are compositionally biased toward polar residues. RPEL repeat units follow at residues 575-600 (NTLI…QPKN) and 613-638 (RRLT…RFNE). The tract at residues 589–608 (ELEQRNILQPKNEADRQAEK) is disordered. Residue serine 620 is modified to Phosphoserine.

The protein belongs to the phosphatase and actin regulator family. Binds PPP1CA and actin.

It is found in the cytoplasm. Its subcellular location is the cell projection. The protein localises to the lamellipodium. Regulator of protein phosphatase 1 (PP1) required for neural tube and optic fissure closure, and enteric neural crest cell (ENCCs) migration during development. Acts as an activator of PP1 by interacting with PPP1CA and preventing phosphorylation of PPP1CA at 'Thr-320'. During neural tube closure, localizes to the ventral neural tube and activates PP1, leading to down-regulate cell proliferation within cranial neural tissue and the neural retina. Also acts as a regulator of migration of enteric neural crest cells (ENCCs) by activating PP1, leading to dephosphorylation and subsequent activation of cofilin (COF1 or COF2) and repression of the integrin signaling through the RHO/ROCK pathway. The protein is Phosphatase and actin regulator 4 (Phactr4) of Mus musculus (Mouse).